Reading from the N-terminus, the 297-residue chain is ATP synthase gamma chain (297 aa).

Belongs to the ATPase gamma chain family. F-type ATPases have 2 components, CF(1) - the catalytic core - and CF(0) - the membrane proton channel. CF(1) has five subunits: alpha(3), beta(3), gamma(1), delta(1), epsilon(1). CF(0) has three main subunits: a, b and c.

Its subcellular location is the cell membrane. Its function is as follows. Produces ATP from ADP in the presence of a proton gradient across the membrane. The gamma chain is believed to be important in regulating ATPase activity and the flow of protons through the CF(0) complex. The chain is ATP synthase gamma chain from Micrococcus luteus (strain ATCC 4698 / DSM 20030 / JCM 1464 / CCM 169 / CCUG 5858 / IAM 1056 / NBRC 3333 / NCIMB 9278 / NCTC 2665 / VKM Ac-2230) (Micrococcus lysodeikticus).